The sequence spans 103 residues: Large ribosomal subunit protein bL21 (103 aa).

It belongs to the bacterial ribosomal protein bL21 family. Part of the 50S ribosomal subunit. Contacts protein L20.

Its function is as follows. This protein binds to 23S rRNA in the presence of protein L20. In Ruthia magnifica subsp. Calyptogena magnifica, this protein is Large ribosomal subunit protein bL21.